We begin with the raw amino-acid sequence, 94 residues long: Co-chaperonin GroES (94 aa).

It belongs to the GroES chaperonin family. Heptamer of 7 subunits arranged in a ring. Interacts with the chaperonin GroEL.

It localises to the cytoplasm. In terms of biological role, together with the chaperonin GroEL, plays an essential role in assisting protein folding. The GroEL-GroES system forms a nano-cage that allows encapsulation of the non-native substrate proteins and provides a physical environment optimized to promote and accelerate protein folding. GroES binds to the apical surface of the GroEL ring, thereby capping the opening of the GroEL channel. In Staphylococcus aureus (strain Mu50 / ATCC 700699), this protein is Co-chaperonin GroES.